We begin with the raw amino-acid sequence, 357 residues long: Actin, macronuclear (357 aa).

The protein belongs to the actin family. Post-translationally, met-1 may be removed after translation.

The protein resides in the cytoplasm. It is found in the cytoskeleton. It carries out the reaction ATP + H2O = ADP + phosphate + H(+). Its function is as follows. Actins are highly conserved proteins that are involved in various types of cell motility and are ubiquitously expressed in all eukaryotic cells. In Oxytricha fallax, this protein is Actin, macronuclear.